We begin with the raw amino-acid sequence, 350 residues long: MEHHIRYDAAQRALILLDQRLLPTRQEDFVCRTTEDIVTALQVMVVRGAPAIGVTAAWGCVLAAYEAAEAGDHWHPVLDGLLERIAKARPTAVNLRWAVDRMRKVWKTAGHAPFATLISLWESEARRIHRDDIEINRAMGRHGAALIDEGDTVMTHCNAGALATAGYGTALGVIRGAVDAGKKISVIANETRPFLQGARLTAYELHEDHIPVTVACDNACGHLMRKGMVQKVVVGADRIAANGDAANKIGTYSVALLAREHGVPFYVAAPLSTIDRNTPDGDHIPIEDRTPREVTHVGDTQITPDGVPVYNFAFDVTPAALIAGIVTEVGVLRPPYTESIAEAFRKAGLE.

Substrate-binding positions include 47-49 (RGA), arginine 89, and glutamine 196. The active-site Proton donor is the aspartate 237. Residue 247–248 (NK) coordinates substrate.

This sequence belongs to the eIF-2B alpha/beta/delta subunits family. MtnA subfamily.

It carries out the reaction 5-(methylsulfanyl)-alpha-D-ribose 1-phosphate = 5-(methylsulfanyl)-D-ribulose 1-phosphate. Its pathway is amino-acid biosynthesis; L-methionine biosynthesis via salvage pathway; L-methionine from S-methyl-5-thio-alpha-D-ribose 1-phosphate: step 1/6. In terms of biological role, catalyzes the interconversion of methylthioribose-1-phosphate (MTR-1-P) into methylthioribulose-1-phosphate (MTRu-1-P). This chain is Methylthioribose-1-phosphate isomerase, found in Nitratidesulfovibrio vulgaris (strain DSM 19637 / Miyazaki F) (Desulfovibrio vulgaris).